A 152-amino-acid chain; its full sequence is MFRGASAVNLDSKGRIAIPTRYRPEILEINQGQMVCTVDIRQSCLLLYPLNQWEIIEQKLSKLSNFNPEERSLQRVMLGYATECELDSAGRILISAPLRQHAKLEKSIMLVGQLNKFEIWSESEWQAQIEKDMTLGASGQFAMSEALSMLSL.

2 consecutive SpoVT-AbrB domains span residues 5–52 (ASAV…PLNQ) and 81–124 (ATEC…SESE).

Belongs to the MraZ family. Forms oligomers.

The protein resides in the cytoplasm. Its subcellular location is the nucleoid. The chain is Transcriptional regulator MraZ from Histophilus somni (strain 129Pt) (Haemophilus somnus).